A 455-amino-acid chain; its full sequence is uncharacterized protein (455 aa).

This is an uncharacterized protein from Acanthamoeba polyphaga (Amoeba).